The following is a 306-amino-acid chain: Pantothenate kinase (306 aa).

Residue Gly-91–Ser-98 participates in ATP binding.

Belongs to the prokaryotic pantothenate kinase family.

It is found in the cytoplasm. It catalyses the reaction (R)-pantothenate + ATP = (R)-4'-phosphopantothenate + ADP + H(+). Its pathway is cofactor biosynthesis; coenzyme A biosynthesis; CoA from (R)-pantothenate: step 1/5. The protein is Pantothenate kinase of Streptococcus pneumoniae (strain 70585).